Here is a 63-residue protein sequence, read N- to C-terminus: uncharacterized protein (63 aa).

The chain crosses the membrane as a helical span at residues 15–37 (ISHCHLPLSPATAIAIIICFRIV).

Its subcellular location is the membrane. This is an uncharacterized protein from Saccharomyces cerevisiae (strain ATCC 204508 / S288c) (Baker's yeast).